Here is a 249-residue protein sequence, read N- to C-terminus: MAKKKDTPGDGEFPGFSDTLQRTPKLEKPHYAGHRDRLKQRFRDAPDALADYELLELLLFRAIRRADTKPIAKALLNRFGSIAEVLAAPENLIAEIPGAGPTVALELKLVEAIAKRSARSTVMEREVLGSWDKVINYCTAAMAFETREQFRILFLDKKNKLIADEVQQTGTVDHTPVYPREVVKRALELSATAIILVHNHPSGDPTPSRADIDMTKQLVNAAKALNITVHDHVIIGKHGHASLRSLRLI.

The tract at residues 1-34 (MAKKKDTPGDGEFPGFSDTLQRTPKLEKPHYAGH) is disordered. The segment covering 24-34 (PKLEKPHYAGH) has biased composition (basic and acidic residues). Residues 127–249 (VLGSWDKVIN…HASLRSLRLI (123 aa)) form the MPN domain. Zn(2+) contacts are provided by His-198, His-200, and Asp-211. The JAMM motif signature appears at 198-211 (HNHPSGDPTPSRAD).

It belongs to the UPF0758 family.

This chain is UPF0758 protein BMEI0718, found in Brucella melitensis biotype 1 (strain ATCC 23456 / CCUG 17765 / NCTC 10094 / 16M).